A 243-amino-acid chain; its full sequence is Purine nucleoside phosphorylase YfiH (243 aa).

The Zn(2+) site is built by H71, C107, and H124.

This sequence belongs to the purine nucleoside phosphorylase YfiH/LACC1 family. In terms of assembly, homodimer. It depends on Cu(2+) as a cofactor. Requires Zn(2+) as cofactor.

The enzyme catalyses adenosine + phosphate = alpha-D-ribose 1-phosphate + adenine. It carries out the reaction S-methyl-5'-thioadenosine + phosphate = 5-(methylsulfanyl)-alpha-D-ribose 1-phosphate + adenine. It catalyses the reaction inosine + phosphate = alpha-D-ribose 1-phosphate + hypoxanthine. The catalysed reaction is adenosine + H2O + H(+) = inosine + NH4(+). In terms of biological role, purine nucleoside enzyme that catalyzes the phosphorolysis of adenosine and inosine nucleosides, yielding D-ribose 1-phosphate and the respective free bases, adenine and hypoxanthine. Also catalyzes the phosphorolysis of S-methyl-5'-thioadenosine into adenine and S-methyl-5-thio-alpha-D-ribose 1-phosphate. Also has adenosine deaminase activity. May also act as a polyphenol oxidase: able to oxidize syringaldazine and 2,2'-azino-bis(3-ethylbenzthiazoline-6-sulfonic acid) (ABTS) in vitro. This Escherichia coli (strain K12) protein is Purine nucleoside phosphorylase YfiH.